We begin with the raw amino-acid sequence, 202 residues long: Putative transposon Tn552 DNA-invertase bin3 (202 aa).

The Resolvase/invertase-type recombinase catalytic domain maps to 1 to 143 (MIIGYARVSS…QGIQVAKEKG (143 aa)). Catalysis depends on Ser-9, which acts as the O-(5'-phospho-DNA)-serine intermediate.

It belongs to the site-specific recombinase resolvase family.

Potential DNA invertase. The polypeptide is Putative transposon Tn552 DNA-invertase bin3 (bin3) (Staphylococcus aureus).